Reading from the N-terminus, the 406-residue chain is MNFPIERVRADFPLLSRQVNGQPLVYLDSAASAQKPQAVIDKELHFYRDGYAAVHRGIHSLSAEAIQQMEAVRTQVADFIHAASAEEIIFVRGTTEAINLVANSYGRHFLAAGDSIIITEMEHHANIVPWQMLAQDLGVEIRVWPLTATGELEITALAALIDDTTRLLAVTQVSNVLGTVNPIKDIVAQAKAAGLVVLVDGAQAVMHQPVDVQALGCDFYVFSGHKLYGPSGIGILYGKSALLQQMPPWEGGGAMIKTVSLTQGTTFADAPWRFEAGSPNTAGIMGLGAAIDYVTELGLLPIQQYEQSLMHYALAQLSQIKSLTLYGPTERAGVIAFNLGQHHAYDVGSFLDQYGIAIRTGHHCAMPLMAFYQVPSMCRASLALYNTREDVDRLVAGLQRIEKLLG.

At Lys-226 the chain carries N6-(pyridoxal phosphate)lysine. Cys-364 (cysteine persulfide intermediate) is an active-site residue.

The protein belongs to the class-V pyridoxal-phosphate-dependent aminotransferase family. Csd subfamily. In terms of assembly, homodimer. Interacts with SufE and the SufBCD complex composed of SufB, SufC and SufD. The interaction with SufE is required to mediate the direct transfer of the sulfur atom from the S-sulfanylcysteine. Pyridoxal 5'-phosphate serves as cofactor.

It localises to the cytoplasm. The catalysed reaction is (sulfur carrier)-H + L-cysteine = (sulfur carrier)-SH + L-alanine. The enzyme catalyses L-selenocysteine + AH2 = hydrogenselenide + L-alanine + A + H(+). The protein operates within cofactor biosynthesis; iron-sulfur cluster biosynthesis. Cysteine desulfurases mobilize the sulfur from L-cysteine to yield L-alanine, an essential step in sulfur metabolism for biosynthesis of a variety of sulfur-containing biomolecules. Component of the suf operon, which is activated and required under specific conditions such as oxidative stress and iron limitation. Acts as a potent selenocysteine lyase in vitro, that mobilizes selenium from L-selenocysteine. Selenocysteine lyase activity is however unsure in vivo. This is Cysteine desulfurase from Yersinia pestis bv. Antiqua (strain Angola).